Reading from the N-terminus, the 346-residue chain is MALRYVVHDEISGFDQLKPEEYEVPQKLNPGEVLVKLKAASLNYRDLIITKGLYPLPLQLPVVPGSDGAGIIEKVGEDVEGFEKGDSVVCNFFTNYLDGTPTDFATHSALGGTRDGCFQKYAVLPAHALVHAPKNLSFEEIATLPCAAVTAWNGLFGSKEHQVKPGNNVLVLGTGGVSTFALQFALAAGANVTVTSSSDEKLEFAKKLGATHTINYKKTPQWASPALKMTNGVGYHHVIEVGGEKTLPQSIACLAKDGMISMIGFVASEGTTPNLTSIIGQILNRNANIRGIFVGSVSMFRDMVACIEAKDIHPVVDKVFPFDQLKEAYEYQWSQAHIGKVVLKID.

Belongs to the zinc-containing alcohol dehydrogenase family. Quinone oxidoreductase subfamily.

It localises to the cytoplasm. The polypeptide is Zinc-type alcohol dehydrogenase-like protein C1773.06c (Schizosaccharomyces pombe (strain 972 / ATCC 24843) (Fission yeast)).